The chain runs to 265 residues: 4-hydroxy-2-oxo-heptane-1,7-dioate aldolase (265 aa).

His45 functions as the Proton acceptor in the catalytic mechanism. Gln147 contributes to the substrate binding site. Residue Glu149 participates in a divalent metal cation binding. Substrate-binding residues include Ala174 and Asp175. Position 175 (Asp175) interacts with a divalent metal cation.

This sequence belongs to the HpcH/HpaI aldolase family. As to quaternary structure, homohexamer; trimer of dimers. Requires a divalent metal cation as cofactor.

It carries out the reaction 4-hydroxy-2-oxoheptanedioate = succinate semialdehyde + pyruvate. It participates in aromatic compound metabolism; 4-hydroxyphenylacetate degradation; pyruvate and succinate semialdehyde from 4-hydroxyphenylacetate: step 7/7. Catalyzes the reversible retro-aldol cleavage of 4-hydroxy-2-ketoheptane-1,7-dioate (HKHD) to pyruvate and succinic semialdehyde. The protein is 4-hydroxy-2-oxo-heptane-1,7-dioate aldolase of Klebsiella pneumoniae subsp. pneumoniae (strain ATCC 700721 / MGH 78578).